The sequence spans 196 residues: Adenine phosphoribosyltransferase (196 aa).

It belongs to the purine/pyrimidine phosphoribosyltransferase family. As to quaternary structure, homodimer.

The protein resides in the cytoplasm. The catalysed reaction is AMP + diphosphate = 5-phospho-alpha-D-ribose 1-diphosphate + adenine. It participates in purine metabolism; AMP biosynthesis via salvage pathway; AMP from adenine: step 1/1. Catalyzes a salvage reaction resulting in the formation of AMP, that is energically less costly than de novo synthesis. This Methylibium petroleiphilum (strain ATCC BAA-1232 / LMG 22953 / PM1) protein is Adenine phosphoribosyltransferase.